The sequence spans 441 residues: uncharacterized protein (441 aa).

11 helical membrane passes run 62 to 82 (FLSL…FEIG), 88 to 108 (LILT…KLFG), 112 to 132 (IALT…IIAL), 154 to 174 (ALLH…LLVV), 192 to 212 (WMFF…YLLY), 224 to 244 (ALMI…GVAS), 247 to 267 (ANLS…YMVC), 312 to 332 (IVLF…ATFA), 335 to 355 (ISVM…IIFL), 363 to 383 (QGMW…NLLL), and 399 to 419 (ILCS…LLYA).

The protein localises to the membrane. This is an uncharacterized protein from Schizosaccharomyces pombe (strain 972 / ATCC 24843) (Fission yeast).